Consider the following 631-residue polypeptide: Sperm-associated antigen 16 protein (631 aa).

Residues D152 to R267 are a coiled coil. Residues Q266–K332 form a disordered region. Basic and acidic residues-rich tracts occupy residues K277–A287 and G295–K304. WD repeat units follow at residues L350–T389, G392–T431, G434–T473, G476–S515, G518–S557, I560–M600, and G601–W630.

Interacts with SPAG6 and STK36. Phosphorylated by TSSK2. In terms of tissue distribution, isoform 1 is detected in testis. Isoform 4 is detected in testis and brain, and at lower levels in kidney, heart, pancreas, thyroid, ovary, adrenal gland, spinal cord, trachea and liver.

The protein resides in the cytoplasm. Its subcellular location is the cytoskeleton. It is found in the flagellum axoneme. It localises to the cilium axoneme. The protein localises to the cell projection. The protein resides in the cilium. Its subcellular location is the flagellum. Its function is as follows. Necessary for sperm flagellar function. Plays a role in motile ciliogenesis. May help to recruit STK36 to the cilium or apical surface of the cell to initiate subsequent steps of construction of the central pair apparatus of motile cilia. The protein is Sperm-associated antigen 16 protein (SPAG16) of Homo sapiens (Human).